A 262-amino-acid polypeptide reads, in one-letter code: Ribosomal RNA small subunit methyltransferase A (262 aa).

Residues histidine 13, leucine 15, glycine 40, glutamate 61, aspartate 85, and asparagine 103 each coordinate S-adenosyl-L-methionine.

Belongs to the class I-like SAM-binding methyltransferase superfamily. rRNA adenine N(6)-methyltransferase family. RsmA subfamily.

The protein resides in the cytoplasm. It carries out the reaction adenosine(1518)/adenosine(1519) in 16S rRNA + 4 S-adenosyl-L-methionine = N(6)-dimethyladenosine(1518)/N(6)-dimethyladenosine(1519) in 16S rRNA + 4 S-adenosyl-L-homocysteine + 4 H(+). In terms of biological role, specifically dimethylates two adjacent adenosines (A1518 and A1519) in the loop of a conserved hairpin near the 3'-end of 16S rRNA in the 30S particle. May play a critical role in biogenesis of 30S subunits. This Bordetella avium (strain 197N) protein is Ribosomal RNA small subunit methyltransferase A.